A 251-amino-acid polypeptide reads, in one-letter code: Large ribosomal subunit protein uL16m (251 aa).

The N-terminal 29 residues, 1–29 (MWRLLSGARAPVLRATLSDSWAAPPARAG), are a transit peptide targeting the mitochondrion.

It belongs to the universal ribosomal protein uL16 family. Component of the mitochondrial ribosome large subunit (39S) which comprises a 16S rRNA and about 50 distinct proteins.

It localises to the mitochondrion. This chain is Large ribosomal subunit protein uL16m (MRPL16), found in Bos taurus (Bovine).